Here is a 61-residue protein sequence, read N- to C-terminus: Large ribosomal subunit protein uL30 (61 aa).

Belongs to the universal ribosomal protein uL30 family. In terms of assembly, part of the 50S ribosomal subunit.

This is Large ribosomal subunit protein uL30 from Oenococcus oeni (strain ATCC BAA-331 / PSU-1).